The following is a 213-amino-acid chain: A-type ATP synthase subunit D (213 aa).

Belongs to the V-ATPase D subunit family. In terms of assembly, has multiple subunits with at least A(3), B(3), C, D, E, F, H, I and proteolipid K(x).

The protein localises to the cell membrane. Functionally, component of the A-type ATP synthase that produces ATP from ADP in the presence of a proton gradient across the membrane. The sequence is that of A-type ATP synthase subunit D from Saccharolobus islandicus (strain Y.N.15.51 / Yellowstone #2) (Sulfolobus islandicus).